We begin with the raw amino-acid sequence, 88 residues long: Small ribosomal subunit protein bS16c (88 aa).

The protein belongs to the bacterial ribosomal protein bS16 family.

The protein resides in the plastid. It is found in the chloroplast. The sequence is that of Small ribosomal subunit protein bS16c from Atropa belladonna (Belladonna).